Consider the following 291-residue polypeptide: Flavin-dependent thymidylate synthase (291 aa).

A ThyX domain is found at 31–241; the sequence is GFVRVVDYMG…PMVHAAFVEY (211 aa). Residues serine 77, 100–102, and glutamate 108 contribute to the FAD site; that span reads RHR. Residues 97–100, 108–112, and arginine 180 each bind dUMP; these read QWVR and EYSAR. The short motif at 100-110 is the ThyX motif element; sequence RHRTASINEYS. Residue 196-198 coordinates FAD; it reads NLH. Residue arginine 207 participates in dUMP binding. Arginine 207 (involved in ionization of N3 of dUMP, leading to its activation) is an active-site residue.

This sequence belongs to the thymidylate synthase ThyX family. As to quaternary structure, homotetramer. The cofactor is FAD.

It catalyses the reaction dUMP + (6R)-5,10-methylene-5,6,7,8-tetrahydrofolate + NADPH + H(+) = dTMP + (6S)-5,6,7,8-tetrahydrofolate + NADP(+). Its pathway is pyrimidine metabolism; dTTP biosynthesis. Its function is as follows. Catalyzes the reductive methylation of 2'-deoxyuridine-5'-monophosphate (dUMP) to 2'-deoxythymidine-5'-monophosphate (dTMP) while utilizing 5,10-methylenetetrahydrofolate (mTHF) as the methyl donor, and NADPH and FADH(2) as the reductant. This is Flavin-dependent thymidylate synthase from Anaplasma marginale (strain St. Maries).